The primary structure comprises 180 residues: Trafficking protein particle complex subunit 3 (180 aa).

Residue Cys-68 is the site of S-palmitoyl cysteine attachment.

This sequence belongs to the TRAPP small subunits family. BET3 subfamily. As to quaternary structure, homodimer. Part of the multisubunit TRAPP (transport protein particle) complex.

It is found in the golgi apparatus. Its subcellular location is the cis-Golgi network. The protein resides in the endoplasmic reticulum. May play a role in vesicular transport from endoplasmic reticulum to Golgi. In Gallus gallus (Chicken), this protein is Trafficking protein particle complex subunit 3 (TRAPPC3).